A 175-amino-acid polypeptide reads, in one-letter code: Large ribosomal subunit protein uL10 (175 aa).

This sequence belongs to the universal ribosomal protein uL10 family. In terms of assembly, part of the ribosomal stalk of the 50S ribosomal subunit. The N-terminus interacts with L11 and the large rRNA to form the base of the stalk. The C-terminus forms an elongated spine to which L12 dimers bind in a sequential fashion forming a multimeric L10(L12)X complex.

Functionally, forms part of the ribosomal stalk, playing a central role in the interaction of the ribosome with GTP-bound translation factors. The protein is Large ribosomal subunit protein uL10 of Prochlorococcus marinus (strain MIT 9301).